The sequence spans 130 residues: Small ribosomal subunit protein uS11c (130 aa).

This sequence belongs to the universal ribosomal protein uS11 family. Part of the 30S ribosomal subunit.

Its subcellular location is the plastid. It localises to the chloroplast. The protein is Small ribosomal subunit protein uS11c of Chlorokybus atmophyticus (Soil alga).